The following is a 205-amino-acid chain: Small ribosomal subunit protein mS26 (205 aa).

Residues 1-26 constitute a mitochondrion transit peptide; it reads MLRALSTLGARPLGRPPAQFLLLARG.

Belongs to the mitochondrion-specific ribosomal protein mS26 family. As to quaternary structure, component of the mitochondrial ribosome small subunit (28S) which comprises a 12S rRNA and about 30 distinct proteins.

It localises to the mitochondrion. The chain is Small ribosomal subunit protein mS26 (MRPS26) from Bos taurus (Bovine).